Consider the following 460-residue polypeptide: C4-dicarboxylate transport protein (460 aa).

8 consecutive transmembrane segments (helical) span residues 21–38 (LYFQ…IGHF), 53–75 (FIKL…GIAG), 88–110 (YALL…VVNV), 153–175 (IVGA…FGFA), 196–218 (VMFN…AMAF), 231–253 (LGQL…LGSI), 301–323 (VVGL…YLTM), and 363–385 (FIVL…ALIL). A disordered region spans residues 438–460 (PEDDLGVAEGPTPANAVNTTKTV).

Belongs to the dicarboxylate/amino acid:cation symporter (DAACS) (TC 2.A.23) family.

The protein localises to the cell inner membrane. In terms of biological role, responsible for the transport of dicarboxylates such as succinate, fumarate, and malate from the periplasm across the membrane. The protein is C4-dicarboxylate transport protein of Pseudomonas syringae pv. tomato (strain ATCC BAA-871 / DC3000).